The chain runs to 288 residues: MTYQQDNDKLYRYLFQNRAVRGEWVRMNKSFSETLNTHHYPIAVQNLLGEMMVATGLLTATLKFTGHITVQIQGDGPLKLALVNGTDSQQIRALARLQGEISDDMTLHQMIGKGVLVITIAPEEGERYQGVVTLDKPTITECLEEYFERSEQLKTQLIIRTGEFNGEPVAAGMLLQVMPDGSGSPDDFEHLAALTATVKDDEIFGLTAEEMLYRLYHEEQVEIYAPQAVTFHCGCSAERSGAALLLISDAELDEILAEHNGSIDMQCECCGTHYFFNRDAIDKLKMQQ.

2 disulfides stabilise this stretch: Cys233-Cys235 and Cys267-Cys270.

The protein belongs to the HSP33 family. Post-translationally, under oxidizing conditions two disulfide bonds are formed involving the reactive cysteines. Under reducing conditions zinc is bound to the reactive cysteines and the protein is inactive.

The protein localises to the cytoplasm. Its function is as follows. Redox regulated molecular chaperone. Protects both thermally unfolding and oxidatively damaged proteins from irreversible aggregation. Plays an important role in the bacterial defense system toward oxidative stress. In Actinobacillus succinogenes (strain ATCC 55618 / DSM 22257 / CCUG 43843 / 130Z), this protein is 33 kDa chaperonin.